The chain runs to 400 residues: Inosine-5'-monophosphate dehydrogenase (400 aa).

A compositionally biased stretch (basic and acidic residues) spans 96–116 (KNESTPDQNLDKESTDGKDTK). Positions 96–125 (KNESTPDQNLDKESTDGKDTKSNNNIDAYS) are disordered. NAD(+) contacts are provided by residues Asp-163 and 212–214 (GIG). Positions 214 and 216 each coordinate K(+). Ser-217 provides a ligand contact to IMP. Cys-219 is a K(+) binding site. Cys-219 (thioimidate intermediate) is an active-site residue. IMP-binding positions include 252–254 (DGG), 275–276 (GS), and 299–303 (YRGMG). Arg-315 (proton acceptor) is an active-site residue. Glu-329 lines the IMP pocket. Residues Glu-383, Ser-384, and His-385 each coordinate K(+).

This sequence belongs to the IMPDH/GMPR family. In terms of assembly, homotetramer. K(+) serves as cofactor.

The protein resides in the cytoplasm. The catalysed reaction is IMP + NAD(+) + H2O = XMP + NADH + H(+). Its pathway is purine metabolism; XMP biosynthesis via de novo pathway; XMP from IMP: step 1/1. With respect to regulation, mycophenolic acid (MPA) is a non-competitive inhibitor that prevents formation of the closed enzyme conformation by binding to the same site as the amobile flap. In contrast, mizoribine monophosphate (MZP) is a competitive inhibitor that induces the closed conformation. MPA is a potent inhibitor of mammalian IMPDHs but a poor inhibitor of the bacterial enzymes. MZP is a more potent inhibitor of bacterial IMPDH. Resistant to mycophenolic acid (MPA) inhibition. In terms of biological role, catalyzes the conversion of inosine 5'-phosphate (IMP) to xanthosine 5'-phosphate (XMP), the first committed and rate-limiting step in the de novo synthesis of guanine nucleotides, and therefore plays an important role in the regulation of cell growth. This Cryptosporidium parvum protein is Inosine-5'-monophosphate dehydrogenase.